Here is a 718-residue protein sequence, read N- to C-terminus: SANT and BTB domain regulator of class switch recombination (718 aa).

Residues 21–59 (DMILYPLIGIPQTINWETVARLVPGLTPKECVKRFDELK) form the SANT domain. The 109-residue stretch at 147–255 (MVIHVCDEAK…QCIQYCHKNM (109 aa)) folds into the BTB domain. A compositionally biased stretch (acidic residues) spans 555 to 576 (SEEEEYTTGSEVTEDEVGDEEE). Disordered stretches follow at residues 555 to 622 (SEEE…SPFV) and 690 to 718 (RASV…GRPA). Basic residues predominate over residues 580-595 (KQRKKEKPKKFTKPPK). The span at 604–615 (QKKEKTLEKSTS) shows a compositional bias: basic and acidic residues.

This sequence belongs to the KIAA1841 family. Homodimer. Interacts (via the BTB domain) with HDAC1 and NCOR2.

Its function is as follows. Negatively regulates class switch recombination or isotype switching in splenic B-cells. The protein is SANT and BTB domain regulator of class switch recombination of Mus musculus (Mouse).